The sequence spans 188 residues: Ribosome-recycling factor (188 aa).

This sequence belongs to the RRF family.

The protein localises to the cytoplasm. Its function is as follows. Responsible for the release of ribosomes from messenger RNA at the termination of protein biosynthesis. May increase the efficiency of translation by recycling ribosomes from one round of translation to another. The polypeptide is Ribosome-recycling factor (Gluconacetobacter diazotrophicus (strain ATCC 49037 / DSM 5601 / CCUG 37298 / CIP 103539 / LMG 7603 / PAl5)).